A 226-amino-acid polypeptide reads, in one-letter code: Ribonuclease 3 (226 aa).

Positions 6–128 (INKLQRKLGY…LIGGVFLDSD (123 aa)) constitute an RNase III domain. Residue E41 participates in Mg(2+) binding. The active site involves D45. The Mg(2+) site is built by D114 and E117. Residue E117 is part of the active site. The 71-residue stretch at 155–225 (DPKTRLQEFL…AEQALIKLGI (71 aa)) folds into the DRBM domain.

It belongs to the ribonuclease III family. In terms of assembly, homodimer. Requires Mg(2+) as cofactor.

It is found in the cytoplasm. It carries out the reaction Endonucleolytic cleavage to 5'-phosphomonoester.. Its function is as follows. Digests double-stranded RNA. Involved in the processing of primary rRNA transcript to yield the immediate precursors to the large and small rRNAs (23S and 16S). Processes some mRNAs, and tRNAs when they are encoded in the rRNA operon. Processes pre-crRNA and tracrRNA of type II CRISPR loci if present in the organism. The protein is Ribonuclease 3 of Erwinia tasmaniensis (strain DSM 17950 / CFBP 7177 / CIP 109463 / NCPPB 4357 / Et1/99).